A 326-amino-acid chain; its full sequence is Olfactory receptor 11H1 (326 aa).

The Extracellular segment spans residues methionine 1–serine 44. 2 N-linked (GlcNAc...) asparagine glycosylation sites follow: asparagine 13 and asparagine 18. Residues leucine 45–tryptophan 65 traverse the membrane as a helical segment. Residues cysteine 66–threonine 72 lie on the Cytoplasmic side of the membrane. A helical transmembrane segment spans residues proline 73 to valine 93. Topologically, residues proline 94–cysteine 112 are extracellular. A glycan (N-linked (GlcNAc...) asparagine) is linked at asparagine 106. The cysteines at positions 112 and 194 are disulfide-linked. A helical membrane pass occupies residues phenylalanine 113–methionine 133. At alanine 134–lysine 158 the chain is on the cytoplasmic side. Residues leucine 159–serine 179 form a helical membrane-spanning segment. Over glutamine 180 to threonine 216 the chain is Extracellular. A helical membrane pass occupies residues leucine 217–leucine 237. Residues lysine 238–histidine 259 lie on the Cytoplasmic side of the membrane. Residues leucine 260–glycine 280 traverse the membrane as a helical segment. At histidine 281–lysine 287 the chain is on the extracellular side. The helical transmembrane segment at isoleucine 288 to glutamine 308 threads the bilayer. The Cytoplasmic portion of the chain corresponds to asparagine 309–isoleucine 326.

The protein belongs to the G-protein coupled receptor 1 family.

Its subcellular location is the cell membrane. Its function is as follows. Odorant receptor. The chain is Olfactory receptor 11H1 (OR11H1) from Homo sapiens (Human).